An 821-amino-acid chain; its full sequence is DNA ligase (821 aa).

Residues 50-54 (DAEYD), 99-100 (SL), and E140 contribute to the NAD(+) site. Residue K142 is the N6-AMP-lysine intermediate of the active site. 4 residues coordinate NAD(+): R163, E200, K319, and K343. Zn(2+) contacts are provided by C452, C455, C470, and C476. The region spanning 742–821 (AAALPLEGKT…AGLQALLAGN (80 aa)) is the BRCT domain.

The protein belongs to the NAD-dependent DNA ligase family. LigA subfamily. The cofactor is Mg(2+). Mn(2+) is required as a cofactor.

The catalysed reaction is NAD(+) + (deoxyribonucleotide)n-3'-hydroxyl + 5'-phospho-(deoxyribonucleotide)m = (deoxyribonucleotide)n+m + AMP + beta-nicotinamide D-nucleotide.. In terms of biological role, DNA ligase that catalyzes the formation of phosphodiester linkages between 5'-phosphoryl and 3'-hydroxyl groups in double-stranded DNA using NAD as a coenzyme and as the energy source for the reaction. It is essential for DNA replication and repair of damaged DNA. In Chromobacterium violaceum (strain ATCC 12472 / DSM 30191 / JCM 1249 / CCUG 213 / NBRC 12614 / NCIMB 9131 / NCTC 9757 / MK), this protein is DNA ligase.